The chain runs to 400 residues: uncharacterized protein (400 aa).

It to M.jannaschii MJ1544 and MJ1637.

This is an uncharacterized protein from Haemophilus influenzae (strain ATCC 51907 / DSM 11121 / KW20 / Rd).